The chain runs to 739 residues: MKKTTIPTLSALTLAMSLAFGGAAIAQEQVTGNQFWWPEQLNLSPLRQNAVESNPYGSDYHYAEAFKSLDLDAVKKDIKALMTESQDWWPADYGHYGPFFIRMAWHSAGVYRIFDGRGGAAGGQQRFEPLNSWPDNVNLDKARRLLWPIKQKYGSKISWGDLMVFTGNVALESMGFKTFGFAGGRVDDWEAEQVNWGSEKAWLDSKRRNEKGELAKPMGATQMGLIYVNPEGPNGVPDPLASAKEIRDTFGRMAMNDEETVALIAGGHTFGKAHGAHDPSKCVGADPAASGVEAQGLGWKNKCGKGHSEDTVTSGLEGAWSSNPTKWTMEYLTWLYTFDWVQTKSPAGHIQWIPADGKAANLIPDAHIADKRHAPMMFTSDIALKEDPIYREITTRFLKNPQEFELAFAKAWFKLTHRDMGPKARYLGADVPAEMLIWQDPIPALDHLVIDNADIKALGNKILASGLTVPELVRTAWASASSFRGTDMRGGANGARIRLEPMMNWQANNPKELAKVLAKLEKVQKDFNGSLKGGKKVSLADVIVLGGSVAVEKAAKEAGVAVSVPFTPGRMDATQAQTDVSSFAVLEPTADGFRNYYSKDSSHSPAEMLIERANMLNLTVPEMTVLVGGLRALDANSAGVKHGVFTDKPGTLSNDFFVNLLDMSTKWSKSEKQEGIYEGQDRKSGKLKWTATPVDLVFGSHSELRAVSEVYGAQDGQDRFVQDFIKAWNKVMNADRFDI.

An N-terminal signal peptide occupies residues 1 to 26 (MKKTTIPTLSALTLAMSLAFGGAAIA). The segment at residues 105–227 (WHSAGVYRIF…MGATQMGLIY (123 aa)) is a cross-link (tryptophyl-tyrosyl-methioninium (Trp-Tyr) (with M-253)). His106 (proton acceptor) is an active-site residue. The segment at residues 227-253 (YVNPEGPNGVPDPLASAKEIRDTFGRM) is a cross-link (tryptophyl-tyrosyl-methioninium (Tyr-Met) (with W-105)). His268 serves as a coordination point for heme b.

Belongs to the peroxidase family. Peroxidase/catalase subfamily. Homodimer or homotetramer. Heme b serves as cofactor. Post-translationally, formation of the three residue Trp-Tyr-Met cross-link is important for the catalase, but not the peroxidase activity of the enzyme.

It carries out the reaction H2O2 + AH2 = A + 2 H2O. The catalysed reaction is 2 H2O2 = O2 + 2 H2O. Its function is as follows. Bifunctional enzyme with both catalase and broad-spectrum peroxidase activity. This chain is Catalase-peroxidase 2, found in Shewanella sp. (strain MR-4).